The sequence spans 330 residues: MKTAYIAKQRQISFVKSHFSRQLEERLGLIEVQAPILSRVGDGTQDNLSGCEKAVQVKVKALPDAQFEVVHSLAKWKRQTLGQHDFSAGEGLYTHMKALRPDEDRLSPLHSVYVDQWDWERVMGDGERQFSTLKSTVEAIWAGIKATEAEVHKQFGLAPFLPEQIQFVHSQELLSRYPDLDAKGRERAIAKELGAVFLVGIGGKLSDGHRHDVRAPDYDDWSSASELGYAGLNGDILVWNPVLEDAFELSSMGIRVDADTLMRQLALTGDEDRLQLVWHQALLRGEMPQTIGGGIGQSRLTMLLLQLPHIGQVQCGVWPAQVRESIPAIL.

The protein belongs to the class-II aminoacyl-tRNA synthetase family. AsnA subfamily.

It is found in the cytoplasm. It catalyses the reaction L-aspartate + NH4(+) + ATP = L-asparagine + AMP + diphosphate + H(+). Its pathway is amino-acid biosynthesis; L-asparagine biosynthesis; L-asparagine from L-aspartate (ammonia route): step 1/1. In Salmonella agona (strain SL483), this protein is Aspartate--ammonia ligase.